A 305-amino-acid polypeptide reads, in one-letter code: Alpha-N-acetylgalactosaminide alpha-2,6-sialyltransferase 3 (305 aa).

The Cytoplasmic segment spans residues 1 to 8 (MACILKRK). The chain crosses the membrane as a helical; Signal-anchor for type II membrane protein span at residues 9-29 (PALAVSFIALCILLLAMRLAN). Residues 30 to 305 (DVTFPLLLNC…VFTHPNWTVS (276 aa)) lie on the Lumenal side of the membrane. Cysteine 80 and cysteine 229 are joined by a disulfide. 2 N-linked (GlcNAc...) asparagine glycosylation sites follow: asparagine 239 and asparagine 301.

The protein belongs to the glycosyltransferase 29 family. In terms of tissue distribution, in adults it is highly expressed in spleen, followed by kidney and lesser in lung. Not found in liver and skeletal muscle. In newborns it is abundantly expressed in brain and kidney.

It is found in the golgi apparatus membrane. It carries out the reaction an alpha-Neu5Ac-(2-&gt;3)-beta-D-Gal-(1-&gt;3)-D-GlcNAc derivative + CMP-N-acetyl-beta-neuraminate = an alpha-Neu5Ac-(2-&gt;3)-beta-D-Gal-(1-&gt;3)-[alpha-Neu5Ac-(2-&gt;6)]-D-GlcNAc derivative + CMP + H(+). The catalysed reaction is a ganglioside GM1b + CMP-N-acetyl-beta-neuraminate = a ganglioside GD1alpha + CMP + H(+). The enzyme catalyses a ganglioside GM1b (d18:1(4E)) + CMP-N-acetyl-beta-neuraminate = a ganglioside GD1alpha (d18:1(4E)) + CMP + H(+). It catalyses the reaction a globoside MSGG + CMP-N-acetyl-beta-neuraminate = a globoside DSGG + CMP + H(+). It carries out the reaction 3-O-[alpha-Neu5Ac-(2-&gt;3)-beta-D-Gal-(1-&gt;3)-alpha-D-GalNAc]-L-Ser-[protein] + CMP-N-acetyl-beta-neuraminate = a 3-O-{alpha-Neu5Ac-(2-&gt;3)-beta-D-Gal-(1-&gt;3)-[alpha-Neu5Ac-(2-&gt;6)]-alpha-D-GalNAc}-L-seryl-[protein] + CMP + H(+). The catalysed reaction is 3-O-[alpha-Neu5Ac-(2-&gt;3)-beta-D-Gal-(1-&gt;3)-alpha-D-GalNAc]-L-Thr-[protein] + CMP-N-acetyl-beta-neuraminate = a 3-O-{alpha-Neu5Ac-(2-&gt;3)-beta-D-Gal-(1-&gt;3)-[alpha-Neu5Ac-(2-&gt;6)]-alpha-D-GalNAc}-L-threonyl-[protein] + CMP + H(+). It functions in the pathway protein modification; protein glycosylation. It participates in glycolipid biosynthesis. Transfers the sialyl group (N-acetyl-alpha-neuraminyl or NeuAc) from CMP-NeuAc to the GalNAc residue on the NeuAc-alpha-2,3-Gal-beta-1,3-GalNAc sequence of glycoproteins and glycolipids forming an alpha-2,6-linkage. Produces branched type disialyl structures by transfer of a sialyl group onto a GalNAc residue inside the backbone core chains. ST6GalNAcIII prefers glycolipids to glycoproteins, predominantly catalyzing the biosynthesis of ganglioside GD1alpha from GM1b. GD1alpha is a critical molecule in the communication and interaction between neuronal cells and their supportive cells, particularly in brain tissues, and functions as an adhesion molecule in the process of metastasis. Sialylation of glycoproteins or glycosphingolipids is very important in tumor development, neuronal development, nerve repair, immunological processes and regulation of hormone sensitivity. The protein is Alpha-N-acetylgalactosaminide alpha-2,6-sialyltransferase 3 (St6galnac3) of Rattus norvegicus (Rat).